The primary structure comprises 203 residues: Shikimate kinase (203 aa).

Residue 32 to 37 (GAGKTA) coordinates ATP. Residue threonine 36 coordinates Mg(2+). Positions 54, 78, and 100 each coordinate substrate. Arginine 138 provides a ligand contact to ATP. Substrate is bound at residue arginine 157.

The protein belongs to the shikimate kinase family. As to quaternary structure, monomer. Mg(2+) serves as cofactor.

Its subcellular location is the cytoplasm. The enzyme catalyses shikimate + ATP = 3-phosphoshikimate + ADP + H(+). It functions in the pathway metabolic intermediate biosynthesis; chorismate biosynthesis; chorismate from D-erythrose 4-phosphate and phosphoenolpyruvate: step 5/7. Catalyzes the specific phosphorylation of the 3-hydroxyl group of shikimic acid using ATP as a cosubstrate. This is Shikimate kinase from Mesorhizobium japonicum (strain LMG 29417 / CECT 9101 / MAFF 303099) (Mesorhizobium loti (strain MAFF 303099)).